Consider the following 253-residue polypeptide: ATP synthase subunit a (253 aa).

Transmembrane regions (helical) follow at residues 27-47 (ISFTNASGFMLLGVVLVIGFF), 87-107 (FFPFVFTLFFFILFANLIGMV), 117-137 (IIVTGALAMTVILMVIVVGLI), 146-166 (LFAPSGAPLPIYIILTPIEII), 196-216 (FTVMLIGAGAIYIPVAALAFA), and 224-244 (LEFLVAGLQAYVFAILTCVYL).

It belongs to the ATPase A chain family. As to quaternary structure, F-type ATPases have 2 components, CF(1) - the catalytic core - and CF(0) - the membrane proton channel. CF(1) has five subunits: alpha(3), beta(3), gamma(1), delta(1), epsilon(1). CF(0) has three main subunits: a(1), b(2) and c(9-12). The alpha and beta chains form an alternating ring which encloses part of the gamma chain. CF(1) is attached to CF(0) by a central stalk formed by the gamma and epsilon chains, while a peripheral stalk is formed by the delta and b chains.

It is found in the cell inner membrane. Its function is as follows. Key component of the proton channel; it plays a direct role in the translocation of protons across the membrane. The chain is ATP synthase subunit a from Hyphomonas neptunium (strain ATCC 15444).